Consider the following 777-residue polypeptide: Phosphoribosylformylglycinamidine synthase subunit PurL (777 aa).

His-50 is a catalytic residue. Positions 53 and 92 each coordinate ATP. Glu-94 contributes to the Mg(2+) binding site. Residues 95-98 (SHNH) and Arg-117 contribute to the substrate site. Residue His-96 is the Proton acceptor of the active site. Asp-118 is a binding site for Mg(2+). Gln-241 serves as a coordination point for substrate. Asp-269 provides a ligand contact to Mg(2+). 313–315 (ESQ) provides a ligand contact to substrate. ATP is bound by residues Asp-520 and Gly-557. Position 558 (Asn-558) interacts with Mg(2+). Position 560 (Ser-560) interacts with substrate.

This sequence belongs to the FGAMS family. Monomer. Part of the FGAM synthase complex composed of 1 PurL, 1 PurQ and 2 PurS subunits.

Its subcellular location is the cytoplasm. The catalysed reaction is N(2)-formyl-N(1)-(5-phospho-beta-D-ribosyl)glycinamide + L-glutamine + ATP + H2O = 2-formamido-N(1)-(5-O-phospho-beta-D-ribosyl)acetamidine + L-glutamate + ADP + phosphate + H(+). The protein operates within purine metabolism; IMP biosynthesis via de novo pathway; 5-amino-1-(5-phospho-D-ribosyl)imidazole from N(2)-formyl-N(1)-(5-phospho-D-ribosyl)glycinamide: step 1/2. Part of the phosphoribosylformylglycinamidine synthase complex involved in the purines biosynthetic pathway. Catalyzes the ATP-dependent conversion of formylglycinamide ribonucleotide (FGAR) and glutamine to yield formylglycinamidine ribonucleotide (FGAM) and glutamate. The FGAM synthase complex is composed of three subunits. PurQ produces an ammonia molecule by converting glutamine to glutamate. PurL transfers the ammonia molecule to FGAR to form FGAM in an ATP-dependent manner. PurS interacts with PurQ and PurL and is thought to assist in the transfer of the ammonia molecule from PurQ to PurL. The polypeptide is Phosphoribosylformylglycinamidine synthase subunit PurL (Trichormus variabilis (strain ATCC 29413 / PCC 7937) (Anabaena variabilis)).